We begin with the raw amino-acid sequence, 326 residues long: ATPase GET3 (326 aa).

32–39 is a binding site for ATP; sequence KGGVGKTT. The active site involves Asp-61. Glu-244 and Asn-271 together coordinate ATP. Zn(2+)-binding residues include Cys-282 and Cys-285.

This sequence belongs to the arsA ATPase family. As to quaternary structure, homodimer.

It localises to the cytoplasm. The protein resides in the endoplasmic reticulum. In terms of biological role, ATPase required for the post-translational delivery of tail-anchored (TA) proteins to the endoplasmic reticulum. Recognizes and selectively binds the transmembrane domain of TA proteins in the cytosol. This complex then targets to the endoplasmic reticulum by membrane-bound receptors, where the tail-anchored protein is released for insertion. This process is regulated by ATP binding and hydrolysis. ATP binding drives the homodimer towards the closed dimer state, facilitating recognition of newly synthesized TA membrane proteins. ATP hydrolysis is required for insertion. Subsequently, the homodimer reverts towards the open dimer state, lowering its affinity for the membrane-bound receptor, and returning it to the cytosol to initiate a new round of targeting. The protein is ATPase GET3 of Phaeosphaeria nodorum (strain SN15 / ATCC MYA-4574 / FGSC 10173) (Glume blotch fungus).